The primary structure comprises 388 residues: Ras-related protein Rab-26 (388 aa).

The interval 1–115 (MASTAVGLGG…HHHSQLSLTG (115 aa)) is disordered. Over residues 7–21 (GLGGGEGDPGAGGPP) the composition is skewed to gly residues. Residues 47 to 56 (RIEELRRRPF) show a composition bias toward basic and acidic residues. A compositionally biased stretch (low complexity) spans 67 to 86 (PASVSASITTTTTQQQQQHH). A compositionally biased stretch (basic residues) spans 87–109 (NPSHHHQSSHHQPSHHHHHHHHS). 197–204 (GDSGVGKT) is a binding site for GTP. The Effector region signature appears at 219-228 (SFSATVGIAL). GTP contacts are provided by residues 246-250 (DTAGQ) and 304-307 (NKAD). Residue Cys382 is the site of S-palmitoyl cysteine attachment. Cys385 is modified (cysteine methyl ester). Cys385 carries S-geranylgeranyl cysteine lipidation. Positions 386-388 (RNM) are cleaved as a propeptide — removed in mature form.

The protein belongs to the small GTPase superfamily. Rab family.

It is found in the cell membrane. In terms of biological role, participates in exocrine secretion. This is Ras-related protein Rab-26 from Drosophila melanogaster (Fruit fly).